A 177-amino-acid polypeptide reads, in one-letter code: Tumor necrosis factor ligand superfamily member 18 (177 aa).

Residues 1 to 27 are Cytoplasmic-facing; the sequence is MCLSHLENMPLSHSRTQGAQRSSWKLW. A helical; Signal-anchor for type II membrane protein transmembrane segment spans residues 28-48; it reads LFCSIVMLLFLCSFSWLIFIF. The THD domain maps to 47–170; sequence IFLQLETAKE…NNTYWGIILL (124 aa). Over 49-177 the chain is Extracellular; it reads LQLETAKEPC…ILLANPQFIS (129 aa). A disulfide bond links Cys58 and Cys78. Asn129 and Asn161 each carry an N-linked (GlcNAc...) asparagine glycan.

The protein belongs to the tumor necrosis factor family. As to quaternary structure, homodimer. Homotrimer. Expressed at high levels in the small intestine, ovary, testis, kidney and endothelial cells.

Its subcellular location is the cell membrane. Its function is as follows. Cytokine that binds to TNFRSF18/AITR/GITR. Regulates T-cell responses. Can function as costimulator and lower the threshold for T-cell activation and T-cell proliferation. Important for interactions between activated T-lymphocytes and endothelial cells. Mediates activation of NF-kappa-B. Triggers increased phosphorylation of STAT1 and up-regulates expression of VCAM1 and ICAM1. Promotes leukocyte adhesion to endothelial cells. Regulates migration of monocytes from the splenic reservoir to sites of inflammation. The chain is Tumor necrosis factor ligand superfamily member 18 from Homo sapiens (Human).